A 427-amino-acid polypeptide reads, in one-letter code: MKILVVGGGGREHAIAAALSRTTGTEIYAAMARKNPGIARLAKEICLTPETNLDRIAAFAQKTGVTHAFIGPEAPLEAGVVDRLSAAGVACAGPTKAAARIETDKAFCRNLMAEYKIEGNPAYRVFFDPKEAIAFVRDHDGDLAVKPIGLTGGKGVRIMGEQVDRAGAIEYIREINGGVVLEERLTGEEFTLQAFVDGTHIVPMPLVQDHKRAFEGDTGPNTGGMGSYTMPDHMLPFVTKKDLTAALSIMVSVVAAMAHKGYPYKGILYGQFMNTAQGPKVIEFNARFGDPEAMNVLTLLSSDLAEVVTGITEGTLSASNVSFEKAATVCKYLVPEGYPSAPKTNSPISIGETGSAITYYANVEEKNGTLQTLSSRTLAFVGKAPTLAEAEQIAENAASSVTGEVFHRRDIGTQALLDRRIAHMKEL.

An ATP-grasp domain is found at 109 to 313 (RNLMAEYKIE…LAEVVTGITE (205 aa)). 136-191 (VRDHDGDLAVKPIGLTGGKGVRIMGEQVDRAGAIEYIREINGGVVLEERLTGEEFT) is a binding site for ATP. Mg(2+) is bound by residues Gln271, Glu283, and Asn285. Positions 271, 283, and 285 each coordinate Mn(2+).

The protein belongs to the GARS family. Mg(2+) serves as cofactor. Mn(2+) is required as a cofactor.

The catalysed reaction is 5-phospho-beta-D-ribosylamine + glycine + ATP = N(1)-(5-phospho-beta-D-ribosyl)glycinamide + ADP + phosphate + H(+). Its pathway is purine metabolism; IMP biosynthesis via de novo pathway; N(1)-(5-phospho-D-ribosyl)glycinamide from 5-phospho-alpha-D-ribose 1-diphosphate: step 2/2. The chain is Phosphoribosylamine--glycine ligase from Methanoregula boonei (strain DSM 21154 / JCM 14090 / 6A8).